The primary structure comprises 761 residues: MRYNQLSYIPTSLETAVAELQALGFAVQQEQAPKENFAIFLRKLFFHFQDTDYPLSHMIASKDLDLLTFLTSDATLTKEVFDLVALQVLGFIPAVDFTDAQDFIQKIGFPIVFDSQQLLLNLHQLLATRQKSGVTLIDSLVSQGLLPMDNCYHYFNGKALATFDTTSLIREVVYVEAPLDTDQDGQLDLIKVNIIRPKASTAIPSMMTASPYHQGINETANDKKLHRMEGELSPKAPRRITVEPTDFQPLATKPSRLPVNECQETFSHISSYTLNDYFLARGFANLYVSGVGTAGSTGFMTSGDYAQIESFKAVIDWLNGRATAYTSHKRDYQIKADWSNGLVATTGKSYLGTMSTGLATTGVDGLAVIIAEAAISSWYDYYRENGLVCSPGGYPGEDLDVLTELTYSRNLLPGDYLRHNDHYQQLLSQQSQALERQSGNYNQFWHDRNYLPQADRIKCEVVYTHGLQDWNVKPRQVYNIFNALPDSLGKHLFLHHGEHVYMHNWQSIDFREAMNALLCQKMLGQNNGFTLPTIIWQDNQKEQTWKELTAFGGHSKRQIALGDDHVLIDNHYGEEDFKRYSKDFRAFKAELFEGKANQAVIDILLEEDLPINGQACLKLKLKSSENKGILAAQLLDYGKKKRFADIPAILELDSIDNGQQFAREALKELPFKDSPYRVVTKGVLNLQHRSDLLTIEDIPNDQWMTITFHLQPTIYHMAKGDTLRVVLYTTDFEHTIRDNSNYALTLDLEQSYLLIPTDEEE.

Residues Ser-349, Asp-469, and His-499 each act as charge relay system in the active site.

This sequence belongs to the peptidase S15 family. Homodimer.

The protein resides in the cytoplasm. It carries out the reaction Hydrolyzes Xaa-Pro-|- bonds to release unblocked, N-terminal dipeptides from substrates including Ala-Pro-|-p-nitroanilide and (sequentially) Tyr-Pro-|-Phe-Pro-|-Gly-Pro-|-Ile.. Functionally, removes N-terminal dipeptides sequentially from polypeptides having unsubstituted N-termini provided that the penultimate residue is proline. This is Xaa-Pro dipeptidyl-peptidase from Streptococcus equi subsp. equi (strain 4047).